Reading from the N-terminus, the 274-residue chain is Large ribosomal subunit protein uL2 (274 aa).

A disordered region spans residues 197–274 (NSDHALEKSG…SKYIIERRKK (78 aa)). Basic residues-rich tracts occupy residues 207–220 (KAGR…RPHN) and 244–274 (PRSR…RRKK).

Belongs to the universal ribosomal protein uL2 family. As to quaternary structure, part of the 50S ribosomal subunit. Forms a bridge to the 30S subunit in the 70S ribosome.

One of the primary rRNA binding proteins. Required for association of the 30S and 50S subunits to form the 70S ribosome, for tRNA binding and peptide bond formation. It has been suggested to have peptidyltransferase activity; this is somewhat controversial. Makes several contacts with the 16S rRNA in the 70S ribosome. In Porphyromonas gingivalis (strain ATCC BAA-308 / W83), this protein is Large ribosomal subunit protein uL2.